The sequence spans 273 residues: Shikimate dehydrogenase (NADP(+)) (273 aa).

Residues Ser15–Ser17 and Thr62 contribute to the shikimate site. The active-site Proton acceptor is Lys66. Position 78 (Glu78) interacts with NADP(+). 2 residues coordinate shikimate: Asn87 and Asp102. Residues Gly127 to Ala131, Asn151 to Lys156, and Met215 contribute to the NADP(+) site. Tyr217 contributes to the shikimate binding site. Residue Gly239 coordinates NADP(+).

It belongs to the shikimate dehydrogenase family. Homodimer.

The catalysed reaction is shikimate + NADP(+) = 3-dehydroshikimate + NADPH + H(+). It participates in metabolic intermediate biosynthesis; chorismate biosynthesis; chorismate from D-erythrose 4-phosphate and phosphoenolpyruvate: step 4/7. Its function is as follows. Involved in the biosynthesis of the chorismate, which leads to the biosynthesis of aromatic amino acids. Catalyzes the reversible NADPH linked reduction of 3-dehydroshikimate (DHSA) to yield shikimate (SA). In Laribacter hongkongensis (strain HLHK9), this protein is Shikimate dehydrogenase (NADP(+)).